A 287-amino-acid polypeptide reads, in one-letter code: MASLRDIKSRITSTKKTSQITKAMQMVSAAKLNRAENNAKSFVPYMDKIQEVVSNVGRVSGNVKHPMLLSREVKKTAYLVITSDRGLAGAFNSSVLRSAYQAMQERHQSKDEYAVIAIGRVGRDFFKKREIPIISELTGLGDEVTFTEIKDLARQTIQMFIDGAFDELHLVYNHFVSAITQEVTEKKLLPLSDLGSGGGKRTASYEFEPSEEEVLEVLLPQYAESLIFGALLDSKASEHAARMTAMKNATDNAKELIDSLSLSYNRARQAAITQEITEIVGGAAALE.

The protein belongs to the ATPase gamma chain family. F-type ATPases have 2 components, CF(1) - the catalytic core - and CF(0) - the membrane proton channel. CF(1) has five subunits: alpha(3), beta(3), gamma(1), delta(1), epsilon(1). CF(0) has three main subunits: a, b and c. The F(1)F(0) complex interacts with SpoIIIJ and YqjG; YqgA is found in the same complex. Interacts with FloT.

Its subcellular location is the cell membrane. It is found in the membrane raft. Produces ATP from ADP in the presence of a proton gradient across the membrane. The gamma chain is believed to be important in regulating ATPase activity and the flow of protons through the CF(0) complex. In Bacillus subtilis (strain 168), this protein is ATP synthase gamma chain.